We begin with the raw amino-acid sequence, 2587 residues long: Clavatol synthase claF (2587 aa).

Residues 93–256 (LLSPLVVIVQ…TEVALSGRFH (164 aa)) are N-terminal acylcarrier protein transacylase domain (SAT). The Nucleophile; for transacylase activity role is filled by Cys137. Residue His256 is the Proton donor/acceptor; for transacylase activity of the active site. Residues 383–799 (DDQIAVIGMA…GSNASMIITQ (417 aa)) form the Ketosynthase family 3 (KS3) domain. Catalysis depends on for beta-ketoacyl synthase activity residues Cys548, His683, and His722. Residues 912–1222 (CFGGQISTYV…ESLPLLAEAT (311 aa)) are malonyl-CoA:ACP transacylase (MAT) domain. The segment at 1284 to 1416 (PKGLTTFIGF…GSIVFLPASD (133 aa)) is N-terminal hotdog fold. In terms of domain architecture, PKS/mFAS DH spans 1284–1595 (PKGLTTFIGF…YRLVPMDSMR (312 aa)). The product template (PT) domain stretch occupies residues 1315 to 1593 (LTSANVALNT…ISYRLVPMDS (279 aa)). The segment at 1436-1595 (ASLLQGNGAD…YRLVPMDSMR (160 aa)) is C-terminal hotdog fold. Positions 1609-1635 (STAAVSSKSTPVHAPTPTTTVSSTPSS) are disordered. A compositionally biased stretch (low complexity) spans 1617 to 1635 (STPVHAPTPTTTVSSTPSS). Residues 1654–1728 (PDISAKMCEI…SLVSCIRSTL (75 aa)) form the Carrier domain. Ser1688 bears the O-(pantetheine 4'-phosphoryl)serine mark. Catalysis depends on for methyltransferase activity residues Tyr1947, His2059, and Glu2085. The tract at residues 1952 to 2126 (VNTVWIKQLE…ATYWEKVLQS (175 aa)) is methyltransferase (CMeT) domain. The NADPH-binding (R) domain stretch occupies residues 2208–2452 (SLSSGQCVLV…KILPELDGTL (245 aa)).

Pantetheine 4'-phosphate serves as cofactor.

The catalysed reaction is 3 malonyl-CoA + acetyl-CoA + AH2 + 2 S-adenosyl-L-methionine + H(+) = clavatol + A + 2 S-adenosyl-L-homocysteine + 3 CO2 + 4 CoA + H2O. It functions in the pathway secondary metabolite biosynthesis. Its function is as follows. Non-reducing polyketide synthase; part of the cla gene cluster that produces clavatol and ortho-quinone methide. The clavatol biosynthesis cluster cla and the terrestric acid cluster tra are both involved in the production of peniphenones and penilactones. The non-reducing PKS claF is responsible for the formation of clavatol from successive condensations of 3 malonyl-CoA units, presumably with a simple acetyl-CoA starter unit, and 2 methylation steps. The esterase claE probably collaborates with claF by catalyzing the hydrolysis of ACP-bound acyl intermediates to free the ACP from stalled intermediates. The clavatol oxidase claD then converts clavatol to hydroxyclavatol. Spontaneous dehydration of hydroxyclavatol leads to the accumulation of the highly active ortho-quinone methide. On the other hand, the PKS-NRPS hybrid traA is involved in the formation of crustosic acid, with the help of traB and traD. The polyketide synthase module (PKS) of traA is responsible for the synthesis of the polyketide backbone via the condensation of an acetyl-CoA starter unit with 3 malonyl-CoA units. The downstream nonribosomal peptide synthetase (NRPS) module then amidates the carboxyl end of the polyketide with L-malic acid. Because traA lacks a designated enoylreductase (ER) domain, the required activity is provided the enoyl reductase traG. Crustosic acid undergoes decarboxylation and isomerization to the terrestric acid, catalyzed by the 2-oxoglutarate-dependent dioxygenase traH. Both acids are further converted to the 2 gamma-butyrolactones (R)-5-methyltetronic acid and (S)-5-carboxylmethyltetronic acid, with involvement of the cytochrome P450 monooxygenase claJ. Spontaneous addition of the methide to these gamma-butyrolactones leads to peniphenone D and penilactone D, which undergo again stereospecific attacking by methide to give penilactones A and B. This is Clavatol synthase claF from Penicillium crustosum (Blue mold fungus).